We begin with the raw amino-acid sequence, 192 residues long: Ras-like protein 2 (192 aa).

GTP is bound at residue 12–19 (GGGGVGKS). The short motif at 34-42 (YDPTIEDSY) is the Effector region element. Cys46 is lipidated: S-palmitoyl cysteine. GTP contacts are provided by residues 59–63 (DTAGQ) and 118–121 (NKCD). S-palmitoyl cysteine attachment occurs at residues Cys120 and Cys147. Cys189 bears the Cysteine methyl ester mark. Residue Cys189 is the site of S-farnesyl cysteine attachment. A propeptide spans 190–192 (CLM) (removed in mature form).

It belongs to the small GTPase superfamily. Ras family. In terms of assembly, interacts with hzg.

The protein resides in the cell membrane. It catalyses the reaction GTP + H2O = GDP + phosphate + H(+). With respect to regulation, alternates between an inactive form bound to GDP and an active form bound to GTP. Activated by a guanine nucleotide-exchange factor (GEF) and inactivated by a GTPase-activating protein (GAP). Its function is as follows. May be involved in endocytic processes and/or other transport pathways mediated by vesicle trafficking. May interact functionally with ROP protein. Ras proteins bind GDP/GTP and possess intrinsic GTPase activity. The protein is Ras-like protein 2 (Ras64B) of Drosophila melanogaster (Fruit fly).